A 636-amino-acid chain; its full sequence is Topoisomerase I damage affected protein 7 (636 aa).

Polar residues predominate over residues 1 to 18 (MNSNSTIGRTTLGESDTI). Disordered regions lie at residues 1 to 33 (MNSN…NSRS), 87 to 109 (TLVS…QYDP), 246 to 271 (NKDT…SSTN), 299 to 326 (PTSS…DDTT), and 339 to 362 (QSTT…STSP). Residue Asn4 is glycosylated (N-linked (GlcNAc...) asparagine). Composition is skewed to low complexity over residues 19–33 (SLSF…NSRS) and 87–108 (TLVS…SQYD). N-linked (GlcNAc...) asparagine glycosylation occurs at Asn257. The chain crosses the membrane as a helical span at residues 457 to 477 (IVGSVVGSVGGILICVLVVWF). N-linked (GlcNAc...) asparagine glycosylation is present at Asn492. A compositionally biased stretch (polar residues) spans 510 to 541 (QAKEASLQAQDSGSQQRNTETASANNPFSNEF). Positions 510–551 (QAKEASLQAQDSGSQQRNTETASANNPFSNEFNFKARGNPPP) are disordered. Residue Lys512 forms a Glycyl lysine isopeptide (Lys-Gly) (interchain with G-Cter in ubiquitin) linkage. N-linked (GlcNAc...) asparagine glycosylation is found at Asn557, Asn562, and Asn626. Ser628 bears the Phosphoserine mark.

The protein belongs to the TDA7 family.

The protein localises to the vacuole membrane. This chain is Topoisomerase I damage affected protein 7 (TDA7), found in Saccharomyces cerevisiae (strain ATCC 204508 / S288c) (Baker's yeast).